The sequence spans 344 residues: Endo-1,4-beta-xylanase UM03411 (344 aa).

The signal sequence occupies residues M1–A21. The GH10 domain maps to Q35–T338. The active-site Proton donor is the E166. The N-linked (GlcNAc...) asparagine glycan is linked to N171. E275 (nucleophile) is an active-site residue. A disulfide bond links C293 and C299. 2 N-linked (GlcNAc...) asparagine glycosylation sites follow: N310 and N323.

This sequence belongs to the glycosyl hydrolase 10 (cellulase F) family.

It localises to the secreted. The catalysed reaction is Endohydrolysis of (1-&gt;4)-beta-D-xylosidic linkages in xylans.. It functions in the pathway glycan degradation; xylan degradation. Its function is as follows. Endo-1,4-beta-xylanase involved in the hydrolysis of xylan, a major structural heterogeneous polysaccharide found in plant biomass representing the second most abundant polysaccharide in the biosphere, after cellulose. The polypeptide is Endo-1,4-beta-xylanase UM03411 (Mycosarcoma maydis (Corn smut fungus)).